A 152-amino-acid polypeptide reads, in one-letter code: Cyanate hydratase (152 aa).

Catalysis depends on residues arginine 98, glutamate 101, and serine 124.

It belongs to the cyanase family.

It carries out the reaction cyanate + hydrogencarbonate + 3 H(+) = NH4(+) + 2 CO2. Functionally, catalyzes the reaction of cyanate with bicarbonate to produce ammonia and carbon dioxide. In Uncinocarpus reesii (strain UAMH 1704), this protein is Cyanate hydratase.